Consider the following 214-residue polypeptide: Riboflavin kinase (214 aa).

A disordered region spans residues 1-27 (MRPDRPRDPVTGPDEGPESPYPIRMSG). Residues Thr-44 and Asn-46 each coordinate Mg(2+). Glu-101 (nucleophile) is an active-site residue.

The protein belongs to the flavokinase family. It depends on Zn(2+) as a cofactor. Mg(2+) serves as cofactor.

The enzyme catalyses riboflavin + ATP = FMN + ADP + H(+). Its pathway is cofactor biosynthesis; FMN biosynthesis; FMN from riboflavin (ATP route): step 1/1. Catalyzes the phosphorylation of riboflavin (vitamin B2) to form flavin mononucleotide (FMN) coenzyme. This chain is Riboflavin kinase (fmn1), found in Aspergillus niger (strain ATCC MYA-4892 / CBS 513.88 / FGSC A1513).